We begin with the raw amino-acid sequence, 344 residues long: N-acetyl-gamma-glutamyl-phosphate reductase (344 aa).

Cys148 is an active-site residue.

The protein belongs to the NAGSA dehydrogenase family. Type 1 subfamily.

The protein resides in the cytoplasm. It carries out the reaction N-acetyl-L-glutamate 5-semialdehyde + phosphate + NADP(+) = N-acetyl-L-glutamyl 5-phosphate + NADPH + H(+). The protein operates within amino-acid biosynthesis; L-arginine biosynthesis; N(2)-acetyl-L-ornithine from L-glutamate: step 3/4. Functionally, catalyzes the NADPH-dependent reduction of N-acetyl-5-glutamyl phosphate to yield N-acetyl-L-glutamate 5-semialdehyde. This is N-acetyl-gamma-glutamyl-phosphate reductase from Clostridium botulinum (strain Alaska E43 / Type E3).